The primary structure comprises 558 residues: 5-aminolevulinate synthase, mitochondrial (558 aa).

The N-terminal 25 residues, 1–25 (MERVVKLAAKHCPFVSKADPSALRR), are a transit peptide targeting the mitochondrion. A disordered region spans residues 103 to 124 (TTTPVTKKHQMPKHYASDLNGV). R152, S265, and K284 together coordinate substrate. The pyridoxal 5'-phosphate site is built by S317, H345, and T374. The active site involves K377. The residue at position 377 (K377) is an N6-(pyridoxal phosphate)lysine. Pyridoxal 5'-phosphate is bound by residues T406 and T407. Residue T492 coordinates substrate.

This sequence belongs to the class-II pyridoxal-phosphate-dependent aminotransferase family. In terms of assembly, homodimer. Requires pyridoxal 5'-phosphate as cofactor.

The protein resides in the mitochondrion matrix. The catalysed reaction is succinyl-CoA + glycine + H(+) = 5-aminolevulinate + CO2 + CoA. It participates in porphyrin-containing compound metabolism; protoporphyrin-IX biosynthesis; 5-aminolevulinate from glycine: step 1/1. In terms of biological role, catalyzes the synthesis of 5-aminolevulinate (ALA) from succinyl-CoA and glycine, the first and rate-limiting step in heme biosynthesis. In Schizosaccharomyces pombe (strain 972 / ATCC 24843) (Fission yeast), this protein is 5-aminolevulinate synthase, mitochondrial.